The following is a 511-amino-acid chain: Inactive cytochrome P450 monooxygenase cloA (511 aa).

The chain crosses the membrane as a helical span at residues 17 to 37; that stretch reads ILLTAGLCVPCALVIHGIYNL. 2 N-linked (GlcNAc...) asparagine glycosylation sites follow: Asn-81 and Asn-344. Residue Cys-450 coordinates heme.

It belongs to the cytochrome P450 family. Heme serves as cofactor.

The protein localises to the membrane. Functionally, inactive cytochrome P450 monooxygenase; part of the gene cluster that mediates the biosynthesis of fungal ergot alkaloid. DmaW catalyzes the first step of ergot alkaloid biosynthesis by condensing dimethylallyl diphosphate (DMAP) and tryptophan to form 4-dimethylallyl-L-tryptophan. The second step is catalyzed by the methyltransferase easF that methylates 4-dimethylallyl-L-tryptophan in the presence of S-adenosyl-L-methionine, resulting in the formation of 4-dimethylallyl-L-abrine. The catalase easC and the FAD-dependent oxidoreductase easE then transform 4-dimethylallyl-L-abrine to chanoclavine-I which is further oxidized by easD in the presence of NAD(+), resulting in the formation of chanoclavine-I aldehyde. Agroclavine dehydrogenase easG then mediates the conversion of chanoclavine-I aldehyde to agroclavine via a non-enzymatic adduct reaction: the substrate is an iminium intermediate that is formed spontaneously from chanoclavine-I aldehyde in the presence of glutathione. Further conversion of agroclavine to paspalic acid is a two-step process involving oxidation of agroclavine to elymoclavine and of elymoclavine to paspalic acid, the second step being performed by the elymoclavine oxidase cloA. However, cloA does not encode a functional enzyme indicating that C.fusiformis terminates its ergot alkaloid pathway at elymoclavine. The polypeptide is Inactive cytochrome P450 monooxygenase cloA (Claviceps fusiformis (Ergot fungus)).